A 387-amino-acid chain; its full sequence is Adaptive-response sensory kinase SasA (387 aa).

The tract at residues Met-1–Gln-97 is interacts with KaiC. The 225-residue stretch at Leu-158 to Arg-382 folds into the Histidine kinase domain. His-161 is modified (phosphohistidine; by autocatalysis).

Homooligomerizes. Part of the circadian clock (KaiA, KaiB, KaiC, CikA, RpaA, SasA), the composition of which varies during the circadian cycle. Binds to the CI domain of KaiC; KaiB(fs) and SasA compete for the binding site. Binds preferentially to doubly phosphorylated KaiC. Interacts with LdpA. In terms of processing, autophosphorylates in vitro.

It carries out the reaction ATP + protein L-histidine = ADP + protein N-phospho-L-histidine.. In terms of biological role, member of the two-component regulatory system SasA/RpaA involved in genome-wide circadian gene expression. One of three clock output pathways. Participates in the KaiABC clock protein complex, which constitutes the main circadian regulator in cyanobacteria, via its interaction with KaiC. Required for robustness of the circadian rhythm of gene expression and involved in clock output. KaiC enhances the autophosphorylation activity of SasA, which then transfers its phosphate group to RpaA to activate it. Phosphotransfer is maximal when KaiC phosphorylation is active during the circadian cycle; this two-component system is activated by fully phosphorylated KaiC. A very robust clock is reconstituted with KaiA, KaiB, KaiC, SasA, CikA and RpaA; output is measured by transcription from an appropriate reporter. In addition to its output function, recruits fold-shifted KaiB (KaiB(fs)) to KaiC to cooperatively form the KaiB(6):KaiC(6) complex (independent of SasA kinase activity); at physiological concentrations increases their association. At higher concentrations SasA and KaiB(fs) compete to bind to KaiC. Mutations that decrease cooperativity nearly phenocopy a deletion mutation. Autophosphorylation and phosphotransfer activities are not essential for clock rhythms in continuous light, but they are essential for adaptation to light/dark cycles. This is Adaptive-response sensory kinase SasA from Synechococcus elongatus (strain ATCC 33912 / PCC 7942 / FACHB-805) (Anacystis nidulans R2).